Reading from the N-terminus, the 295-residue chain is 4-hydroxy-tetrahydrodipicolinate synthase (295 aa).

Position 46 (threonine 46) interacts with pyruvate. Residue tyrosine 134 is the Proton donor/acceptor of the active site. The active-site Schiff-base intermediate with substrate is the lysine 162. Isoleucine 205 contacts pyruvate.

Belongs to the DapA family. Homotetramer; dimer of dimers.

It localises to the cytoplasm. The enzyme catalyses L-aspartate 4-semialdehyde + pyruvate = (2S,4S)-4-hydroxy-2,3,4,5-tetrahydrodipicolinate + H2O + H(+). It functions in the pathway amino-acid biosynthesis; L-lysine biosynthesis via DAP pathway; (S)-tetrahydrodipicolinate from L-aspartate: step 3/4. In terms of biological role, catalyzes the condensation of (S)-aspartate-beta-semialdehyde [(S)-ASA] and pyruvate to 4-hydroxy-tetrahydrodipicolinate (HTPA). The chain is 4-hydroxy-tetrahydrodipicolinate synthase from Anaeromyxobacter dehalogenans (strain 2CP-C).